The following is a 1138-amino-acid chain: Transmembrane channel-like protein 3 (1138 aa).

A compositionally biased stretch (low complexity) spans 1 to 15 (MEAAPGTAAAAAKPA). Disordered stretches follow at residues 1-20 (MEAA…SCKK) and 29-54 (NIYT…DSQD). Residues 1-155 (MEAAPGTAAA…VASYFIFLRW (155 aa)) lie on the Cytoplasmic side of the membrane. Residues 156–176 (LFGINIVLTIMTGAFVVLPEL) traverse the membrane as a helical segment. Over 177–202 (LAGAPFGSTVSKTIRQEDLKTAQDLD) the chain is Extracellular. Residues 203–223 (TIWSLGGYLQYSVLFYGYYGS) form a helical membrane-spanning segment. At 224-233 (DRKIGKAGYR) the chain is on the cytoplasmic side. A helical membrane pass occupies residues 234-254 (LPLAYFLVGMAVFAYSFIILL). At 255-327 (KKMAKNSRMS…KNLAVTISLR (73 aa)) the chain is on the extracellular side. N-linked (GlcNAc...) asparagine glycosylation is present at Asn272. The helical transmembrane segment at 328–348 (IIANILVLLSLTGSIYIIYFV) threads the bilayer. At 349–369 (VDRSQKLENNKRELTLWEKNE) the chain is on the cytoplasmic side. A helical membrane pass occupies residues 370–390 (VSVVVSLITMIAPSAFELVAA). Residues 391 to 401 (LEMYHPRTTLR) lie on the Extracellular side of the membrane. Residues 402-422 (FQLARVLVLYLGNLYSLIIAL) form a helical membrane-spanning segment. Topologically, residues 423–508 (LDKVNSMSVT…CWETYVGQEM (86 aa)) are cytoplasmic. A helical membrane pass occupies residues 509 to 529 (LKLSIIDMIFTVASILLIDFF). Over 530 to 569 (RGLCVRYLSDCWCWDLESKFPEYGEFKIAENVLHLVYNQG) the chain is Extracellular. The chain crosses the membrane as a helical span at residues 570–590 (MIWMGAFFSPCLPAFNVLKLI). Residues 591–618 (GLMYLRSWAVLTCNVPHQQVFRASRSNN) lie on the Cytoplasmic side of the membrane. A helical transmembrane segment spans residues 619-639 (FYLAMLLFMLFLCMLPTIFAI). The Extracellular segment spans residues 640–676 (ARYKPSLSCGPFSGQEKIYDIVSETIQNDFPAWFNSV). Residues 677 to 697 (IAYISSPVVVLPALLLLFMLI) traverse the membrane as a helical segment. Over 698–1138 (YYLQSIARSL…EPNELVCSNV (441 aa)) the chain is Cytoplasmic. Residues 753-763 (NSEGTRFQSLD) show a composition bias toward polar residues. Disordered stretches follow at residues 753–859 (NSEG…RYPS), 973–1005 (SPHP…DLRP), and 1065–1095 (PKTK…SSND). The span at 764–773 (GSDKRPDKDG) shows a compositional bias: basic and acidic residues. Composition is skewed to polar residues over residues 777–795 (SQES…SVLN) and 804–813 (TRIQTISQTV). Residues 828–845 (TTPTTSASLTPAPSVSSA) are compositionally biased toward low complexity. Residues 989-998 (HYVKRSHRPR) are compositionally biased toward basic residues. Residues 1074–1095 (SLTESDSVSIESSSDPQNSSND) are compositionally biased toward low complexity.

The protein belongs to the TMC family. As to expression, expressed in a range of tissues including cerebrum, cerebellum, retina, cochlea, lung, liver and heart. Also expressed in the apical, medial and basal portions of the basillar papilla.

Its subcellular location is the membrane. Its function is as follows. Probable component of an ion channel. This Gallus gallus (Chicken) protein is Transmembrane channel-like protein 3.